An 89-amino-acid polypeptide reads, in one-letter code: MSLISIVCLIPFGLIGAVNPIITLSAYAVLGGMYLFVVPLFLFYWMNNRWNVMGKFERLFIYGLVFLFFPGMVLFAPFLNLRMNGKEES.

2 consecutive transmembrane segments (helical) span residues 29–46 and 59–79; these read VLGGMYLFVVPLFLFYWM and LFIYGLVFLFFPGMVLFAPFL.

Belongs to the complex I NdhL subunit family. As to quaternary structure, NDH-1 can be composed of about 15 different subunits; different subcomplexes with different compositions have been identified which probably have different functions.

It is found in the cellular thylakoid membrane. It carries out the reaction a plastoquinone + NADH + (n+1) H(+)(in) = a plastoquinol + NAD(+) + n H(+)(out). The catalysed reaction is a plastoquinone + NADPH + (n+1) H(+)(in) = a plastoquinol + NADP(+) + n H(+)(out). Its function is as follows. NDH-1 shuttles electrons from an unknown electron donor, via FMN and iron-sulfur (Fe-S) centers, to quinones in the respiratory and/or the photosynthetic chain. The immediate electron acceptor for the enzyme in this species is believed to be plastoquinone. Couples the redox reaction to proton translocation, and thus conserves the redox energy in a proton gradient. Cyanobacterial NDH-1 also plays a role in inorganic carbon-concentration. The chain is NAD(P)H-quinone oxidoreductase subunit L from Prochlorococcus marinus (strain NATL1A).